Here is a 313-residue protein sequence, read N- to C-terminus: Glyoxylate/hydroxypyruvate reductase A HPR2 (313 aa).

NADP(+) contacts are provided by residues 152 to 155 (LGRI), 174 to 176 (SRT), 230 to 232 (IGR), and aspartate 256. Arginine 232 is a catalytic residue. Glutamate 261 is a catalytic residue. The active-site Proton donor is histidine 279. An NADP(+)-binding site is contributed by 279–281 (HVG).

Belongs to the D-isomer specific 2-hydroxyacid dehydrogenase family. GyaR subfamily. As to quaternary structure, homodimer.

The protein localises to the cytoplasm. The enzyme catalyses glycolate + NADP(+) = glyoxylate + NADPH + H(+). It catalyses the reaction (R)-glycerate + NAD(+) = 3-hydroxypyruvate + NADH + H(+). It carries out the reaction (R)-glycerate + NADP(+) = 3-hydroxypyruvate + NADPH + H(+). With respect to regulation, strongly inhibited by oxalate. Catalyzes the NADPH-dependent reduction of glyoxylate and hydroxypyruvate (HP) into glycolate and glycerate in the cytoplasm, thus providing a cytosolic bypass to the photorespiratory core cycle. Mostly active in the presence of NADPH and hydroxypyruvate. The polypeptide is Glyoxylate/hydroxypyruvate reductase A HPR2 (HPR2) (Arabidopsis thaliana (Mouse-ear cress)).